The primary structure comprises 83 residues: Sulfur carrier protein TusA (83 aa).

The active-site Cysteine persulfide intermediate is cysteine 19.

It belongs to the sulfur carrier protein TusA family.

The protein resides in the cytoplasm. In terms of biological role, sulfur carrier protein which probably makes part of a sulfur-relay system. The sequence is that of Sulfur carrier protein TusA from Aliivibrio salmonicida (strain LFI1238) (Vibrio salmonicida (strain LFI1238)).